The primary structure comprises 559 residues: Acetylcholinesterase-1 (559 aa).

Positions 1 to 21 (MMLPRCFVTVLLMSSVLYIGG) are cleaved as a signal peptide. Cysteine 92 and cysteine 114 are joined by a disulfide. Residue 142–143 (GG) participates in substrate binding. Residue serine 223 is the Acyl-ester intermediate of the active site. Serine 223 is modified (phosphoserine). The cysteines at positions 276 and 293 are disulfide-linked. N-linked (GlcNAc...) asparagine glycosylation is found at asparagine 278 and asparagine 342. Residue glutamate 354 is the Charge relay system of the active site. Asparagine 374 is a glycosylation site (N-linked (GlcNAc...) asparagine). A disulfide bridge connects residues cysteine 432 and cysteine 550. Histidine 471 (charge relay system) is an active-site residue.

The protein belongs to the type-B carboxylesterase/lipase family. In terms of tissue distribution, expressed by the venom gland.

The protein localises to the secreted. The enzyme catalyses acetylcholine + H2O = choline + acetate + H(+). Its function is as follows. Terminates signal transduction at the neuromuscular junction by rapid hydrolysis of the acetylcholine released into the synaptic cleft. This Trittame loki (Brush-footed trapdoor spider) protein is Acetylcholinesterase-1.